The chain runs to 487 residues: ATP synthase subunit beta (487 aa).

164–171 (GGAGVGKT) contributes to the ATP binding site.

The protein belongs to the ATPase alpha/beta chains family. F-type ATPases have 2 components, CF(1) - the catalytic core - and CF(0) - the membrane proton channel. CF(1) has five subunits: alpha(3), beta(3), gamma(1), delta(1), epsilon(1). CF(0) has four main subunits: a(1), b(1), b'(1) and c(9-12).

Its subcellular location is the cellular thylakoid membrane. It carries out the reaction ATP + H2O + 4 H(+)(in) = ADP + phosphate + 5 H(+)(out). In terms of biological role, produces ATP from ADP in the presence of a proton gradient across the membrane. The catalytic sites are hosted primarily by the beta subunits. The protein is ATP synthase subunit beta of Synechococcus sp. (strain WH7803).